An 81-amino-acid polypeptide reads, in one-letter code: Cell division protein ZapB (81 aa).

Residues 6–80 (EVFEKLEAKV…LQALLGRMEE (75 aa)) adopt a coiled-coil conformation. Polar residues predominate over residues 38–47 (SLAQDVQSAQ). Positions 38–67 (SLAQDVQSAQHQREELERENNHLKEQQSGW) are disordered. Residues 48 to 62 (HQREELERENNHLKE) show a composition bias toward basic and acidic residues.

This sequence belongs to the ZapB family. Homodimer. The ends of the coiled-coil dimer bind to each other, forming polymers. Interacts with FtsZ.

The protein resides in the cytoplasm. Non-essential, abundant cell division factor that is required for proper Z-ring formation. It is recruited early to the divisome by direct interaction with FtsZ, stimulating Z-ring assembly and thereby promoting cell division earlier in the cell cycle. Its recruitment to the Z-ring requires functional FtsA or ZipA. The chain is Cell division protein ZapB from Citrobacter koseri (strain ATCC BAA-895 / CDC 4225-83 / SGSC4696).